Here is a 317-residue protein sequence, read N- to C-terminus: Ribosomal protein L11 methyltransferase (317 aa).

S-adenosyl-L-methionine is bound by residues T158, G179, D201, and N244.

The protein belongs to the methyltransferase superfamily. PrmA family.

The protein localises to the cytoplasm. It carries out the reaction L-lysyl-[protein] + 3 S-adenosyl-L-methionine = N(6),N(6),N(6)-trimethyl-L-lysyl-[protein] + 3 S-adenosyl-L-homocysteine + 3 H(+). Its function is as follows. Methylates ribosomal protein L11. The sequence is that of Ribosomal protein L11 methyltransferase from Lactococcus lactis subsp. lactis (strain IL1403) (Streptococcus lactis).